The primary structure comprises 921 residues: Isoleucine--tRNA ligase (921 aa).

The 'HIGH' region signature appears at 57–67 (PYANGDIHMGH). Glu552 is a binding site for L-isoleucyl-5'-AMP. Positions 593–597 (KMSKS) match the 'KMSKS' region motif. Lys596 is a binding site for ATP. Residues Cys888, Cys891, Cys908, and Cys911 each contribute to the Zn(2+) site.

This sequence belongs to the class-I aminoacyl-tRNA synthetase family. IleS type 1 subfamily. In terms of assembly, monomer. Zn(2+) is required as a cofactor.

It localises to the cytoplasm. It carries out the reaction tRNA(Ile) + L-isoleucine + ATP = L-isoleucyl-tRNA(Ile) + AMP + diphosphate. Its function is as follows. Catalyzes the attachment of isoleucine to tRNA(Ile). As IleRS can inadvertently accommodate and process structurally similar amino acids such as valine, to avoid such errors it has two additional distinct tRNA(Ile)-dependent editing activities. One activity is designated as 'pretransfer' editing and involves the hydrolysis of activated Val-AMP. The other activity is designated 'posttransfer' editing and involves deacylation of mischarged Val-tRNA(Ile). In Bacillus cereus (strain AH187), this protein is Isoleucine--tRNA ligase.